A 401-amino-acid chain; its full sequence is Methyltransferase cfoC (401 aa).

An S-adenosyl-L-methionine-binding site is contributed by Asp-268. His-308 functions as the Proton acceptor in the catalytic mechanism.

This sequence belongs to the class I-like SAM-binding methyltransferase superfamily. Cation-independent O-methyltransferase family.

It functions in the pathway secondary metabolite biosynthesis; flavonoid biosynthesis. Its function is as follows. Methyltransferase; part of the gene cluster that mediates the biosynthesis of chlorflavonin, a fungal flavonoid with acetolactate synthase inhibitory activity. Within the pathway, cfoC is responsible for the methylation at position C8-OH of flavonoid. The pathway begins with the PKS-NRPS hybrid synthetase cfoA that uses benzoic acid or p-hydroxybenzoic acid as a starter unit with four rounds of chain elongation using malonyl-CoA to form the chalcone skeleton. Then, a new type of chalcone isomerase, cfoK, catalyzes the conversion of the chalcone into a flavanone by a histidine-mediated oxa-Michael addition mechanism. The desaturation of flavanone to flavone is catalyzed by a new type of flavone synthase, the flavin mononucleotide (FMN)-dependent oxidoreductase cfoJ. Monooxygenases cfoF, cfoG, and P450 cfoH are responsible for the hydroxylation of the flavonoid skeleton at sites C3, C8, and C2', respectively. Like cfoF, the dehydratase cfoI also plays a role in the hydroxylation of position C3. Methyltransferases cfoB, cfoC, and cfoD then catalyze the methylation of C7-OH, C8-OH, and C3-OH, respectively. Finally, the monooxygenase cfoE is responsible for the chlorination of flavonoid at position C3'. The sequence is that of Methyltransferase cfoC from Aspergillus candidus.